A 429-amino-acid polypeptide reads, in one-letter code: MQFKNALTATAILSASALAANSSTSIPSSCSIGTSATATAQADLDKISGCSTIVGNLTITGDLGSAALASIQEIDGSLTIFNSSSLSSFSADSIKKITGDLNMQELIILTSASFGSLQEVDSINMVTLPAISTFSTDLQNANNIIVSDTTLESVEGFSTLKKVNVFNINNNRYLNSFQSSLESVSDSLQFSSNGDNTTLAFDNLVWANNITLRDVNSISFGSLQTVNASLGFINNTLPSLNLTQLSKVGQSLSIVSNDELSKAAFSNLTTVGGGFIIANNTQLKVIDGFNKVQTVGGAIEFTGNFSTLDLSSLKSVRGGAKFDSSSSNFSCNALKKLQSNGAIQGDSFVCKNGATSTSVKLSSTSTESSKSSATSSASSSGDASNAQANVSASASSSSSSSKKSKGAAPELVPATSFMGVVAAVAVALL.

The N-terminal stretch at 1 to 19 (MQFKNALTATAILSASALA) is a signal peptide. Asn-21, Asn-56, Asn-82, Asn-196, Asn-209, Asn-227, Asn-234, Asn-241, Asn-267, Asn-279, Asn-304, and Asn-328 each carry an N-linked (GlcNAc...) asparagine glycan. Ser-339 carries the post-translational modification Phosphoserine. The segment covering 361 to 401 (LSSTSTESSKSSATSSASSSGDASNAQANVSASASSSSSSS) has biased composition (low complexity). Residues 361 to 410 (LSSTSTESSKSSATSSASSSGDASNAQANVSASASSSSSSSKKSKGAAPE) are disordered. A glycan (N-linked (GlcNAc...) asparagine) is linked at Asn-389. A lipid anchor (GPI-anchor amidated glycine) is attached at Gly-406. A propeptide spans 407–429 (AAPELVPATSFMGVVAAVAVALL) (removed in mature form).

Belongs to the SPS2 family. The GPI-anchor is attached to the protein in the endoplasmic reticulum and serves to target the protein to the cell surface. There, the glucosamine-inositol phospholipid moiety is cleaved off and the GPI-modified mannoprotein is covalently attached via its lipidless GPI glycan remnant to the 1,6-beta-glucan of the outer cell wall layer.

It is found in the cell membrane. The protein resides in the secreted. Its subcellular location is the cell wall. Required for proper cell wall integrity and for the correct assembly of the mannoprotein outer layer of the cell wall. Important for apical bud growth. This Saccharomyces cerevisiae (strain AWRI1631) (Baker's yeast) protein is Cell wall protein ECM33 (ECM33).